We begin with the raw amino-acid sequence, 172 residues long: uncharacterized protein (172 aa).

Residues 22–64 form a disordered region; it reads RSVSSSPAAKQPAPGTVAQSFPPGELALRDETGGRGRGTRGIR.

This is an uncharacterized protein from Human cytomegalovirus (strain AD169) (HHV-5).